Reading from the N-terminus, the 375-residue chain is UDP-N-acetylglucosamine--N-acetylmuramyl-(pentapeptide) pyrophosphoryl-undecaprenol N-acetylglucosamine transferase (375 aa).

UDP-N-acetyl-alpha-D-glucosamine-binding positions include 13-15 (TGG), asparagine 124, arginine 165, serine 193, and glutamine 294.

This sequence belongs to the glycosyltransferase 28 family. MurG subfamily.

It is found in the cell inner membrane. It carries out the reaction di-trans,octa-cis-undecaprenyl diphospho-N-acetyl-alpha-D-muramoyl-L-alanyl-D-glutamyl-meso-2,6-diaminopimeloyl-D-alanyl-D-alanine + UDP-N-acetyl-alpha-D-glucosamine = di-trans,octa-cis-undecaprenyl diphospho-[N-acetyl-alpha-D-glucosaminyl-(1-&gt;4)]-N-acetyl-alpha-D-muramoyl-L-alanyl-D-glutamyl-meso-2,6-diaminopimeloyl-D-alanyl-D-alanine + UDP + H(+). It functions in the pathway cell wall biogenesis; peptidoglycan biosynthesis. Functionally, cell wall formation. Catalyzes the transfer of a GlcNAc subunit on undecaprenyl-pyrophosphoryl-MurNAc-pentapeptide (lipid intermediate I) to form undecaprenyl-pyrophosphoryl-MurNAc-(pentapeptide)GlcNAc (lipid intermediate II). The sequence is that of UDP-N-acetylglucosamine--N-acetylmuramyl-(pentapeptide) pyrophosphoryl-undecaprenol N-acetylglucosamine transferase from Brucella anthropi (strain ATCC 49188 / DSM 6882 / CCUG 24695 / JCM 21032 / LMG 3331 / NBRC 15819 / NCTC 12168 / Alc 37) (Ochrobactrum anthropi).